Consider the following 445-residue polypeptide: Phosphoglucosamine mutase (445 aa).

Residue S102 is the Phosphoserine intermediate of the active site. Mg(2+)-binding residues include S102, D241, D243, and D245. S102 bears the Phosphoserine mark.

This sequence belongs to the phosphohexose mutase family. Mg(2+) is required as a cofactor. In terms of processing, activated by phosphorylation.

It catalyses the reaction alpha-D-glucosamine 1-phosphate = D-glucosamine 6-phosphate. Its function is as follows. Catalyzes the conversion of glucosamine-6-phosphate to glucosamine-1-phosphate. The chain is Phosphoglucosamine mutase from Shewanella denitrificans (strain OS217 / ATCC BAA-1090 / DSM 15013).